The primary structure comprises 102 residues: Small ribosomal subunit protein uS10 (102 aa).

Belongs to the universal ribosomal protein uS10 family. In terms of assembly, part of the 30S ribosomal subunit.

Involved in the binding of tRNA to the ribosomes. The polypeptide is Small ribosomal subunit protein uS10 (Methanoregula boonei (strain DSM 21154 / JCM 14090 / 6A8)).